The primary structure comprises 50 residues: MLNLNFTNITVMGILPEAYAPFDPIVDILPIIPILFFLLAFVWQAAVKFR.

Residues 1–13 (MLNLNFTNITVMG) constitute a propeptide that is removed on maturation. A helical membrane pass occupies residues 25-45 (IVDILPIIPILFFLLAFVWQA).

This sequence belongs to the PsbK family. In terms of assembly, PSII is composed of 1 copy each of membrane proteins PsbA, PsbB, PsbC, PsbD, PsbE, PsbF, PsbH, PsbI, PsbJ, PsbK, PsbL, PsbM, PsbT, PsbY, PsbZ, Psb30/Ycf12, at least 3 peripheral proteins of the oxygen-evolving complex and a large number of cofactors. It forms dimeric complexes.

The protein resides in the plastid. Its subcellular location is the chloroplast thylakoid membrane. One of the components of the core complex of photosystem II (PSII). PSII is a light-driven water:plastoquinone oxidoreductase that uses light energy to abstract electrons from H(2)O, generating O(2) and a proton gradient subsequently used for ATP formation. It consists of a core antenna complex that captures photons, and an electron transfer chain that converts photonic excitation into a charge separation. The sequence is that of Photosystem II reaction center protein K from Euglena myxocylindracea.